The primary structure comprises 330 residues: Phytanoyl-CoA hydroxylase-interacting protein (330 aa).

Residues 6 to 115 (TPHSIEINNI…ETVEFCTGDY (110 aa)) form the Fibronectin type-III domain. N-linked (GlcNAc...) asparagine glycosylation is found at asparagine 14 and asparagine 325.

It belongs to the PHYHIP family. As to quaternary structure, interacts with PHYH and ADGRB1. In terms of tissue distribution, highly expressed in the brain.

Its function is as follows. Its interaction with PHYH suggests a role in the development of the central system. In Homo sapiens (Human), this protein is Phytanoyl-CoA hydroxylase-interacting protein (PHYHIP).